The primary structure comprises 107 residues: Large ribosomal subunit protein uL24 (107 aa).

Belongs to the universal ribosomal protein uL24 family. In terms of assembly, part of the 50S ribosomal subunit.

One of two assembly initiator proteins, it binds directly to the 5'-end of the 23S rRNA, where it nucleates assembly of the 50S subunit. Its function is as follows. One of the proteins that surrounds the polypeptide exit tunnel on the outside of the subunit. The chain is Large ribosomal subunit protein uL24 from Nitrosomonas eutropha (strain DSM 101675 / C91 / Nm57).